Reading from the N-terminus, the 339-residue chain is MTFLIAVVMLGLIIFVHELGHFLTAKLFKMPVSEFSIGMGPQVFSVDTKKTTYSFRAIPIGGYVNIEGMEVGSEVENGFSSKPAYQRFIVLFAGVFMNFLMAFILLFVTAKISGRIEYDTNAIIGGLVKGGANEQILKVDDKILELDGKKINIWTDISKVTKELQDKEEITALVERNGKEENLTLKLTKDEENNRVVLGISPKYKKIDLSTTESLDFAKNSFNSILIDTVKGFFTIFSGKVSLKEVSGPVGIFKVVGEVSKFGWISIASLCVVLSINIGVLNLLPIPALDGGRIIFVLLELVGIKVNKKWEKKLHKGGMILLLFFILMISVNDVWKLFN.

Residue His17 participates in Zn(2+) binding. Residue Glu18 is part of the active site. A Zn(2+)-binding site is contributed by His21. Transmembrane regions (helical) follow at residues 88-110 (FIVL…FVTA), 262-284 (FGWI…LNLL), and 318-335 (GMIL…NDVW). Positions 96 to 179 (FMNFLMAFIL…ITALVERNGK (84 aa)) constitute a PDZ domain.

It belongs to the peptidase M50B family. The cofactor is Zn(2+).

It is found in the cell membrane. The sequence is that of Putative zinc metalloprotease FN1322 from Fusobacterium nucleatum subsp. nucleatum (strain ATCC 25586 / DSM 15643 / BCRC 10681 / CIP 101130 / JCM 8532 / KCTC 2640 / LMG 13131 / VPI 4355).